The primary structure comprises 61 residues: Large ribosomal subunit protein bL32 (61 aa).

Residues 1–16 are compositionally biased toward basic residues; sequence MAVPKKKTSKSRKNMR. Residues 1-20 form a disordered region; that stretch reads MAVPKKKTSKSRKNMRRAHD.

Belongs to the bacterial ribosomal protein bL32 family.

The chain is Large ribosomal subunit protein bL32 from Pelobacter propionicus (strain DSM 2379 / NBRC 103807 / OttBd1).